We begin with the raw amino-acid sequence, 476 residues long: Argininosuccinate lyase (476 aa).

This sequence belongs to the lyase 1 family. Argininosuccinate lyase subfamily.

The protein resides in the cytoplasm. The enzyme catalyses 2-(N(omega)-L-arginino)succinate = fumarate + L-arginine. The protein operates within amino-acid biosynthesis; L-arginine biosynthesis; L-arginine from L-ornithine and carbamoyl phosphate: step 3/3. The sequence is that of Argininosuccinate lyase from Thermobifida fusca (strain YX).